Here is a 349-residue protein sequence, read N- to C-terminus: N-acetyl-gamma-glutamyl-phosphate reductase (349 aa).

Residue C149 is part of the active site.

It belongs to the NAGSA dehydrogenase family. Type 1 subfamily.

Its subcellular location is the cytoplasm. It carries out the reaction N-acetyl-L-glutamate 5-semialdehyde + phosphate + NADP(+) = N-acetyl-L-glutamyl 5-phosphate + NADPH + H(+). Its pathway is amino-acid biosynthesis; L-arginine biosynthesis; N(2)-acetyl-L-ornithine from L-glutamate: step 3/4. Functionally, catalyzes the NADPH-dependent reduction of N-acetyl-5-glutamyl phosphate to yield N-acetyl-L-glutamate 5-semialdehyde. The sequence is that of N-acetyl-gamma-glutamyl-phosphate reductase from Acinetobacter baumannii (strain ACICU).